The following is an 86-amino-acid chain: Trypsin inhibitor (86 aa).

Cystine bridges form between Cys8/Cys65 and Cys49/Cys58.

In terms of biological role, serine protease inhibitor which is active against trypsin. Displays strong antifungal activity against a number of phytopathogenic fungi including M.melonis, A.cucumerina, A.solani, C.glaeosporioides and P.capsici. The chain is Trypsin inhibitor from Fagopyrum tataricum (Tartarian buckwheat).